Consider the following 178-residue polypeptide: ATP synthase subunit b, chloroplastic (178 aa).

The chain crosses the membrane as a helical span at residues 34 to 50 (LAILTGGIFYLGSNALS).

This sequence belongs to the ATPase B chain family. In terms of assembly, F-type ATPases have 2 components, F(1) - the catalytic core - and F(0) - the membrane proton channel. F(1) has five subunits: alpha(3), beta(3), gamma(1), delta(1), epsilon(1). F(0) has four main subunits: a(1), b(1), b'(1) and c(10-14). The alpha and beta chains form an alternating ring which encloses part of the gamma chain. F(1) is attached to F(0) by a central stalk formed by the gamma and epsilon chains, while a peripheral stalk is formed by the delta, b and b' chains.

It is found in the plastid. It localises to the chloroplast thylakoid membrane. Its function is as follows. F(1)F(0) ATP synthase produces ATP from ADP in the presence of a proton or sodium gradient. F-type ATPases consist of two structural domains, F(1) containing the extramembraneous catalytic core and F(0) containing the membrane proton channel, linked together by a central stalk and a peripheral stalk. During catalysis, ATP synthesis in the catalytic domain of F(1) is coupled via a rotary mechanism of the central stalk subunits to proton translocation. Functionally, component of the F(0) channel, it forms part of the peripheral stalk, linking F(1) to F(0). This Ochrosphaera neapolitana protein is ATP synthase subunit b, chloroplastic.